Reading from the N-terminus, the 1108-residue chain is AP-3 complex subunit beta (1108 aa).

4 HEAT repeats span residues 90–127 (DSAL…IDII), 327–363 (IEAQ…LRPS), 397–433 (ENIG…STVP), and 434–471 (DVTE…LNAT). Residues 480–490 (KEKEKEKDVKE) show a composition bias toward basic and acidic residues. Disordered regions lie at residues 480 to 501 (KEKE…HSSS), 736 to 797 (DEEE…YDGE), and 811 to 835 (LFGI…GEEE). 2 stretches are compositionally biased toward acidic residues: residues 736–764 (DEEE…EDFF) and 780–797 (YDED…YDGE).

This sequence belongs to the adaptor complexes large subunit family. In terms of assembly, adaptor protein complex 3 (AP-3) is a heterotetramer composed of two large adaptins (delta-type subunit and beta-type subunit), a medium adaptin (mu-type subunit) and a small adaptin (sigma-type subunit).

The protein localises to the endosome membrane. Its function is as follows. Part of the AP-3 complex, an adaptor-related complex which is essential for the compartmentalization of the endocytic pathway. The sequence is that of AP-3 complex subunit beta (ap3b-1) from Dictyostelium discoideum (Social amoeba).